The sequence spans 236 residues: 1-(5-phosphoribosyl)-5-[(5-phosphoribosylamino)methylideneamino] imidazole-4-carboxamide isomerase (236 aa).

Residue aspartate 8 is the Proton acceptor of the active site. The active-site Proton donor is the aspartate 129.

Belongs to the HisA/HisF family.

Its subcellular location is the cytoplasm. It catalyses the reaction 1-(5-phospho-beta-D-ribosyl)-5-[(5-phospho-beta-D-ribosylamino)methylideneamino]imidazole-4-carboxamide = 5-[(5-phospho-1-deoxy-D-ribulos-1-ylimino)methylamino]-1-(5-phospho-beta-D-ribosyl)imidazole-4-carboxamide. The protein operates within amino-acid biosynthesis; L-histidine biosynthesis; L-histidine from 5-phospho-alpha-D-ribose 1-diphosphate: step 4/9. The chain is 1-(5-phosphoribosyl)-5-[(5-phosphoribosylamino)methylideneamino] imidazole-4-carboxamide isomerase from Methanosphaerula palustris (strain ATCC BAA-1556 / DSM 19958 / E1-9c).